Reading from the N-terminus, the 63-residue chain is Large ribosomal subunit protein bL35 (63 aa).

It belongs to the bacterial ribosomal protein bL35 family.

This chain is Large ribosomal subunit protein bL35, found in Campylobacter curvus (strain 525.92).